The sequence spans 497 residues: Glycerol kinase (497 aa).

T13 provides a ligand contact to ADP. 3 residues coordinate ATP: T13, T14, and S15. Residue T13 participates in sn-glycerol 3-phosphate binding. R17 provides a ligand contact to ADP. The sn-glycerol 3-phosphate site is built by R83, E84, and Y135. Glycerol-binding residues include R83, E84, and Y135. H231 carries the phosphohistidine; by HPr modification. D245 lines the sn-glycerol 3-phosphate pocket. Glycerol contacts are provided by D245 and Q246. The ADP site is built by T267 and G310. T267, G310, Q314, and G411 together coordinate ATP. ADP contacts are provided by G411 and N415.

It belongs to the FGGY kinase family. As to quaternary structure, homotetramer and homodimer (in equilibrium). The phosphoenolpyruvate-dependent sugar phosphotransferase system (PTS), including enzyme I, and histidine-containing protein (HPr) are required for the phosphorylation, which leads to the activation of the enzyme.

It catalyses the reaction glycerol + ATP = sn-glycerol 3-phosphate + ADP + H(+). The protein operates within polyol metabolism; glycerol degradation via glycerol kinase pathway; sn-glycerol 3-phosphate from glycerol: step 1/1. Activated by phosphorylation and inhibited by fructose 1,6-bisphosphate (FBP). Key enzyme in the regulation of glycerol uptake and metabolism. Catalyzes the phosphorylation of glycerol to yield sn-glycerol 3-phosphate. This is Glycerol kinase from Listeria innocua serovar 6a (strain ATCC BAA-680 / CLIP 11262).